The following is an 85-amino-acid chain: U4-theraphotoxin-Hhn1f (85 aa).

A signal peptide spans 1-22 (MKVTLIAILTCAAVLVLHTTAA). Positions 23 to 48 (EELEAESQLMEVGMPDTELAAVDEER) are excised as a propeptide. Cys71 and Cys82 are disulfide-bonded.

Belongs to the neurotoxin 12 (Hwtx-2) family. 02 (Hwtx-2) subfamily. As to expression, expressed by the venom gland.

Its subcellular location is the secreted. In terms of biological role, postsynaptic neurotoxin. This is U4-theraphotoxin-Hhn1f from Cyriopagopus hainanus (Chinese bird spider).